A 449-amino-acid chain; its full sequence is Bifunctional protein GlmU (449 aa).

The tract at residues 1–226 (MNNIHAIILA…KFEVLGVNDK (226 aa)) is pyrophosphorylase. UDP-N-acetyl-alpha-D-glucosamine-binding positions include 9–12 (LAAG), lysine 23, glutamine 73, 78–79 (GT), 100–102 (YGD), glycine 137, glutamate 151, asparagine 166, and asparagine 224. Aspartate 102 lines the Mg(2+) pocket. Asparagine 224 contacts Mg(2+). The interval 227-247 (VQLAELERLFQKDQAIQFMKQ) is linker. The interval 248–449 (GLGLKDPTRF…QKNLKYRSKK (202 aa)) is N-acetyltransferase. UDP-N-acetyl-alpha-D-glucosamine contacts are provided by arginine 330 and lysine 348. Histidine 360 functions as the Proton acceptor in the catalytic mechanism. UDP-N-acetyl-alpha-D-glucosamine contacts are provided by tyrosine 363 and asparagine 374. Residues alanine 377, 383 to 384 (NY), serine 402, alanine 420, and arginine 437 each bind acetyl-CoA.

It in the N-terminal section; belongs to the N-acetylglucosamine-1-phosphate uridyltransferase family. The protein in the C-terminal section; belongs to the transferase hexapeptide repeat family. As to quaternary structure, homotrimer. The cofactor is Mg(2+).

It is found in the cytoplasm. It catalyses the reaction alpha-D-glucosamine 1-phosphate + acetyl-CoA = N-acetyl-alpha-D-glucosamine 1-phosphate + CoA + H(+). The enzyme catalyses N-acetyl-alpha-D-glucosamine 1-phosphate + UTP + H(+) = UDP-N-acetyl-alpha-D-glucosamine + diphosphate. The protein operates within nucleotide-sugar biosynthesis; UDP-N-acetyl-alpha-D-glucosamine biosynthesis; N-acetyl-alpha-D-glucosamine 1-phosphate from alpha-D-glucosamine 6-phosphate (route II): step 2/2. It functions in the pathway nucleotide-sugar biosynthesis; UDP-N-acetyl-alpha-D-glucosamine biosynthesis; UDP-N-acetyl-alpha-D-glucosamine from N-acetyl-alpha-D-glucosamine 1-phosphate: step 1/1. Its pathway is bacterial outer membrane biogenesis; LPS lipid A biosynthesis. Its function is as follows. Catalyzes the last two sequential reactions in the de novo biosynthetic pathway for UDP-N-acetylglucosamine (UDP-GlcNAc). The C-terminal domain catalyzes the transfer of acetyl group from acetyl coenzyme A to glucosamine-1-phosphate (GlcN-1-P) to produce N-acetylglucosamine-1-phosphate (GlcNAc-1-P), which is converted into UDP-GlcNAc by the transfer of uridine 5-monophosphate (from uridine 5-triphosphate), a reaction catalyzed by the N-terminal domain. This Vesicomyosocius okutanii subsp. Calyptogena okutanii (strain HA) protein is Bifunctional protein GlmU.